The sequence spans 1137 residues: MVCGCSALLPLPNPRPTMPATPNFLANPSSSSRWIPLQPMPVAWAFVQKTSALLWLLLLGTSLSPAWGQAKIPLETVKLWADTFGGDLYNTVTKYSGSLLLQKKYKDVESSLKIEEVDGLELVRKFSEDMENMLRRKVEAVQNLVEAAEEADLNHEFNESLVFDYYNSVLINERDEKGNFVELGAEFLLESNAHFSNLPVNTSISSVQLPTNVYNKDPDILNGVYMSEALNAVFVENFQRDPTLTWQYFGSATGFFRIYPGIKWTPDENGVITFDCRNRGWYIQAATSPKDIVILVDVSGSMKGLRMTIAKHTITTILDTLGENDFINIIAYNDYVHYIEPCFKGILVQADRDNREHFKLLVEELMVKGVGVVDQALREAFQILKQFQEAKQGSLCNQAIMLISDGAVEDYEPVFEKYNWPDCKVRVFTYLIGREVSFADRMKWIACNNKGYYTQISTLADTQENVMEYLHVLSRPMVINHDHDIIWTEAYMDSKLLSSQAQSLTLLTTVAMPVFSKKNETRSHGILLGVVGSDVALRELMKLAPRYKLGVHGYAFLNTNNGYILSHPDLRPLYREGKKLKPKPNYNSVDLSEVEWEDQAESLRTAMINRETGTLSMDVKVPMDKGKRVLFLTNDYFFTDISDTPFSLGVVLSRGHGEYILLGNTSVEEGLHDLLHPDLALAGDWIYCITDIDPDHRKLSQLEAMIRFLTRKDPDLECDEELVREVLFDAVVTAPMEAYWTALALNMSEESEHVVDMAFLGTRAGLLRSSLFVGSEKVSDRKFLTPEDEASVFTLDRFPLWYRQASEHPAGSFVFNLRWAEGPESAGEPMVVTASTAVAVTVDKRTAIAAAAGVQMKLEFLQRKFWAATRQCSTVDGPCTQSCEDSDLDCFVIDNNGFILISKRSRETGRFLGEVDGAVLTQLLSMGVFSQVTMYDYQAMCKPSSHHHSAAQPLVSPISAFLTATRWLLQELVLFLLEWSVWGSWYDRGAEAKSVFHHSHKHKKQDPLQPCDTEYPVFVYQPAIREANGIVECGPCQKVFVVQQIPNSNLLLLVTDPTCDCSIFPPVLQEATEVKYNASVKCDRMRSQKLRRRPDSCHAFHPEENAQDCGGASDTSASPPLLLLPVCAWGLLPQLLR.

The signal sequence occupies residues 1–19; that stretch reads MVCGCSALLPLPNPRPTMP. The Extracellular segment spans residues 20–1115; sequence ATPNFLANPS…AQDCGGASDT (1096 aa). Asparagine 201 carries N-linked (GlcNAc...) asparagine glycosylation. The VWFA domain maps to 291-473; sequence DIVILVDVSG…ENVMEYLHVL (183 aa). A divalent metal cation-binding residues include aspartate 297, serine 299, and serine 301. An MIDAS-like motif motif is present at residues 297 to 301; the sequence is DVSGS. Cysteine 447 and cysteine 1097 are joined by a disulfide. Residues 487 to 580 enclose the Cache domain; it reads WTEAYMDSKL…RPLYREGKKL (94 aa). A glycan (N-linked (GlcNAc...) asparagine) is linked at asparagine 664. Residues 1116–1136 form a helical membrane-spanning segment; that stretch reads SASPPLLLLPVCAWGLLPQLL. A topological domain (cytoplasmic) is located at residue arginine 1137.

It belongs to the calcium channel subunit alpha-2/delta family. In terms of assembly, dimer formed of alpha-2-2 and delta-2 chains; disulfide-linked. Voltage-dependent calcium channels are multisubunit complexes, consisting of alpha-1 (CACNA1), alpha-2 (CACNA2D), beta (CACNB) and delta (CACNA2D) subunits in a 1:1:1:1 ratio. Interacts with CACNA1C and CACNB3. May be proteolytically processed into subunits alpha-2-4 and delta-4 that are disulfide-linked. It is however unclear whether such cleavage really takes place in vivo and has a functional role. As to expression, predominantly expressed in certain types of endocrine cells. Present in the Paneth cells of the small intestine. Also present in the erythroblasts in the fetal liver, in the cells of the zona reticularis of the adrenal gland and in the basophils of the pituitary. Present at low level in some brain regions such as the cerebellum (at protein level).

The protein resides in the membrane. Its function is as follows. The alpha-2/delta subunit of voltage-dependent calcium channels regulates calcium current density and activation/inactivation kinetics of the calcium channel. The chain is Voltage-dependent calcium channel subunit alpha-2/delta-4 (CACNA2D4) from Homo sapiens (Human).